The chain runs to 291 residues: Ribosomal large subunit pseudouridine synthase B (291 aa).

The S4 RNA-binding domain maps to 3 to 63; that stretch reads EKLQKVLARA…GHLISVKESA (61 aa). The Nucleophile role is filled by aspartate 110. The segment at 272–291 is disordered; the sequence is VKRHSQIAGGRRSGGRNNNG.

This sequence belongs to the pseudouridine synthase RsuA family.

The enzyme catalyses uridine(2605) in 23S rRNA = pseudouridine(2605) in 23S rRNA. Its function is as follows. Responsible for synthesis of pseudouridine from uracil-2605 in 23S ribosomal RNA. This Salmonella typhi protein is Ribosomal large subunit pseudouridine synthase B (rluB).